Here is a 223-residue protein sequence, read N- to C-terminus: Ribose-5-phosphate isomerase A (223 aa).

Substrate-binding positions include 32 to 35, 85 to 88, and 98 to 101; these read TGST, DGAD, and KGGG. The active-site Proton acceptor is the E107. Substrate is bound at residue K125.

The protein belongs to the ribose 5-phosphate isomerase family. As to quaternary structure, homodimer.

It catalyses the reaction aldehydo-D-ribose 5-phosphate = D-ribulose 5-phosphate. It functions in the pathway carbohydrate degradation; pentose phosphate pathway; D-ribose 5-phosphate from D-ribulose 5-phosphate (non-oxidative stage): step 1/1. Its function is as follows. Catalyzes the reversible conversion of ribose-5-phosphate to ribulose 5-phosphate. The protein is Ribose-5-phosphate isomerase A of Pseudomonas aeruginosa (strain LESB58).